The primary structure comprises 729 residues: Transketolase (729 aa).

Substrate is bound at residue H97. Thiamine diphosphate is bound by residues H138 and 186-188 (GPL). D227 contacts Mg(2+). Residues G228 and N257 each coordinate thiamine diphosphate. Mg(2+)-binding residues include N257 and I259. Substrate is bound by residues H332, R423, and S450. H332 contributes to the thiamine diphosphate binding site. Catalysis depends on E477, which acts as the Proton donor. Residue F503 participates in thiamine diphosphate binding. Residues H527, D535, and R586 each contribute to the substrate site.

Belongs to the transketolase family. Homodimer. Mg(2+) serves as cofactor. The cofactor is Ca(2+). It depends on Mn(2+) as a cofactor. Co(2+) is required as a cofactor. Requires thiamine diphosphate as cofactor.

It catalyses the reaction D-sedoheptulose 7-phosphate + D-glyceraldehyde 3-phosphate = aldehydo-D-ribose 5-phosphate + D-xylulose 5-phosphate. Its function is as follows. Catalyzes the transfer of a two-carbon ketol group from a ketose donor to an aldose acceptor, via a covalent intermediate with the cofactor thiamine pyrophosphate. In Streptococcus pyogenes serotype M6 (strain ATCC BAA-946 / MGAS10394), this protein is Transketolase.